The following is a 757-amino-acid chain: MDVNPTLLFLKVPAQNAISTTFPYTGDPPYSHGTGTGYTMDTVNRTHQYSEKGKWTTNTETGAPQLNPIDGPLPENHEPSGYAQTDCVLEAMAFLEESHPGIFENSCLETMEVVQQTRVDKLTQGRQTYDWTLNRNQPAATALANTIEVFRSNDLTANESGRLIDFLKDVMESMDKEEMEITTHFQRKRRIRDNMTKKMVTQRTIGKKKQRLNKKSYLIRALTLNTMTKDAERGKLKRRAIATPGMQIRGFVYFVETLARSICEKLEQSGLPVGGNEKKAKLANVVRKMMTNSQDTELSFTITGDNTKWNENQNPRMFLAMITYITRNQPDWFRNVLSIAPIMFSNKMARLGKGYMFESKSMKLRTQIPAEMLANIDLKYFNESTRKKIEKIRPLLIDGTASLSPGMMMGMFNMLSTVLGVSILNLGQKRYTKTTYWWDGLQSSDDFALIVNAPNHEGIQAGVDRFYRTCKLVGINMSKKKSYINRTGTFEFTSFFYRYGFVANFSMELPSFGVSGINESADMSIGVTVIKNNMINNDLGPATAQMALQLFIKDYRYTYRCHRGDTQIQTRRSFELKKLWEQTRSKAGLLVSDGGPNLYNIRNLHIPEVCLKWELMDEDYQGRLCNPLNPFVSHKEIESVNNAVVMPAHGPAKSMEYDAVATTHSWIPKRNRSILNTSQRGILEDEQMYQKCCNLFEKFFPSSSYRRPVGISSMVEAMVSRARIDARIDFESGRIKKEEFAEIMKICSTIEELRRQK.

The disordered stretch occupies residues Ser-50 to Gly-81. The segment covering Trp-55 to Pro-64 has biased composition (polar residues). 2 short sequence motifs (nuclear localization signal) span residues Arg-187–Met-195 and Arg-203–Ser-216. The segment at Arg-249–Glu-256 is promoter-binding site. Residues Val-286–Tyr-483 form the RdRp catalytic domain.

This sequence belongs to the influenza viruses polymerase PB1 family. In terms of assembly, influenza RNA polymerase is composed of three subunits: PB1, PB2 and PA. Interacts (via N-terminus) with PA (via C-terminus). Interacts (via C-terminus) with PB2 (via N-terminus); this interaction is essential for transcription initiation. Phosphorylated by host PRKCA.

It localises to the host nucleus. The protein resides in the host cytoplasm. The catalysed reaction is RNA(n) + a ribonucleoside 5'-triphosphate = RNA(n+1) + diphosphate. Its function is as follows. RNA-dependent RNA polymerase which is responsible for replication and transcription of virus RNA segments. The transcription of viral mRNAs occurs by a unique mechanism called cap-snatching. 5' methylated caps of cellular mRNAs are cleaved after 10-13 nucleotides by PA. In turn, these short capped RNAs are used as primers by PB1 for transcription of viral mRNAs. During virus replication, PB1 initiates RNA synthesis and copy vRNA into complementary RNA (cRNA) which in turn serves as a template for the production of more vRNAs. This chain is RNA-directed RNA polymerase catalytic subunit, found in Aves (Cat).